A 238-amino-acid polypeptide reads, in one-letter code: Mannose-binding protein A (238 aa).

The signal sequence occupies residues 1-17; the sequence is MLLLPLLVLLCVVSVSS. The segment covering 38–49 has biased composition (basic and acidic residues); that stretch reads DGRDGPKGEKGE. Positions 38–87 are disordered; sequence DGRDGPKGEKGEPGQGLRGLQGPPGKLGPPGSVGAPGSQGPKGQKGDRGD. The 50-residue stretch at 39–88 folds into the Collagen-like domain; that stretch reads GRDGPKGEKGEPGQGLRGLQGPPGKLGPPGSVGAPGSQGPKGQKGDRGDS. Pro-43 is subject to 4-hydroxyproline. Lys-44 and Lys-47 each carry 5-hydroxylysine. Residues Lys-44 and Lys-47 are each glycosylated (O-linked (Gal...) hydroxylysine). 5 positions are modified to 4-hydroxyproline: Pro-50, Pro-61, Pro-67, Pro-73, and Pro-78. 5-hydroxylysine is present on residues Lys-79 and Lys-82. Lys-79 and Lys-82 each carry an O-linked (Gal...) hydroxylysine glycan. Residues 143–238 form the C-type lectin domain; that stretch reads ALCSELRGTV…SHTAVCEFPA (96 aa). 2 cysteine pairs are disulfide-bonded: Cys-145–Cys-234 and Cys-212–Cys-226. Ca(2+)-binding residues include Asp-178, Glu-182, Glu-202, Asn-204, Asp-205, Glu-210, Asp-211, Asn-222, and Asp-223. A calcium-dependent carbohydrate binding region spans residues 202-210; the sequence is EPNDHGSGE.

In terms of assembly, homotrimer. Forms higher oligomeric complexes formed by the association of two, three or more homotrimers. Oligomerization occurs in the endoplasmic reticulum. Interacts with MASP1 and MASP2. Hydroxylated on lysine and proline residues within the collagen-like domain. Post-translationally, O-glycosylated. O-linked glycans on hydroxylysine residues consist of Glc-Gal disaccharides bound to the oxygen atom of post-translationally added hydroxyl groups. As to expression, detected in blood serum (at protein level).

Its subcellular location is the secreted. Its function is as follows. Calcium-dependent lectin. Plays a role in the innate immune response by binding mannose, fucose and N-acetylglucosamine moieties on different microorganisms and mediating activation of the lectin complement pathway. Binds to late apoptotic cells, as well as to apoptotic blebs and to necrotic cells, but not to early apoptotic cells, facilitating their uptake by macrophages. This Rattus norvegicus (Rat) protein is Mannose-binding protein A (Mbl1).